The primary structure comprises 120 residues: Small ribosomal subunit protein uS17 (120 aa).

Low complexity predominate over residues 1–22 (MMAEAKTGAKATKSAAAGAADG). The tract at residues 1-46 (MMAEAKTGAKATKSAAAGAADGASKEKGPKHTPSPPKPSGRRKTRI) is disordered.

It belongs to the universal ribosomal protein uS17 family. As to quaternary structure, part of the 30S ribosomal subunit.

In terms of biological role, one of the primary rRNA binding proteins, it binds specifically to the 5'-end of 16S ribosomal RNA. The chain is Small ribosomal subunit protein uS17 from Mycobacterium ulcerans (strain Agy99).